A 391-amino-acid chain; its full sequence is Nucleosome assembly protein 1-like 1 (391 aa).

Positions 1 to 10 are enriched in basic and acidic residues; it reads MADIDNKEQS. The tract at residues 1-32 is disordered; the sequence is MADIDNKEQSELDQDLDDVEEVEEEETGEETK. Residue alanine 2 is modified to N-acetylalanine. Serine 10 carries the phosphoserine modification. Residues 11–28 show a composition bias toward acidic residues; it reads ELDQDLDDVEEVEEEETG. Phosphothreonine is present on residues threonine 62 and threonine 64. Phosphoserine is present on serine 69. Lysine 116 bears the N6-acetyllysine mark. The NAP1L motif signature appears at 125 to 150; that stretch reads YEPTEEECEWKPDEEDEISEELKEKA. Positions 132-143 are enriched in acidic residues; sequence CEWKPDEEDEIS. Residues 132 to 163 are disordered; the sequence is CEWKPDEEDEISEELKEKAKVEDEKKDEEKED. Serine 143 is subject to Phosphoserine. The segment covering 144–163 has biased composition (basic and acidic residues); that stretch reads EELKEKAKVEDEKKDEEKED. The Nuclear localization signal signature appears at 273–279; sequence IKKKQKH. A disordered region spans residues 345–391; it reads EAIEDDDDDYDEEGEEADEEGEEEGDEENDPDYDPKKDQNPAECKQQ. The span at 346-376 shows a compositional bias: acidic residues; the sequence is AIEDDDDDYDEEGEEADEEGEEEGDEENDPD. 5-glutamyl polyglycine is present on residues glutamate 359 and glutamate 360. Residues 377-391 are compositionally biased toward basic and acidic residues; the sequence is YDPKKDQNPAECKQQ. Position 388 is a cysteine methyl ester (cysteine 388). Cysteine 388 carries S-farnesyl cysteine lipidation. Residues 389–391 constitute a propeptide, removed in mature form; the sequence is KQQ.

Belongs to the nucleosome assembly protein (NAP) family. In terms of assembly, homodimer. The dimer binds strongly and sequentially to single and double H2A-H2B heterodimers. Interacts with ERCC6; this interaction increases ERCC6 processivity. Interacts with RAD54. Interacts with SETD1A. Post-translationally, polyglycylated by TTLL10 on glutamate residues, resulting in polyglycine chains on the gamma-carboxyl group. Both polyglutamylation and polyglycylation modifications can coexist on the same protein on adjacent residues, and lowering polyglycylation levels increases polyglutamylation, and reciprocally. Polyglutamylated by TTLL4 on glutamate residues, resulting in polyglutamate chains on the gamma-carboxyl group. Both polyglutamylation and polyglycylation modifications can coexist on the same protein on adjacent residues, and lowering polyglycylation levels increases polyglutamylation, and reciprocally.

The protein localises to the nucleus. The protein resides in the melanosome. It is found in the cytoplasm. Histone chaperone that plays a role in the nuclear import of H2A-H2B and nucleosome assembly. Also participates in several important DNA repair mechanisms: greatly enhances ERCC6-mediated chromatin remodeling which is essential for transcription-coupled nucleotide excision DNA repair. Also stimulates homologous recombination (HR) by RAD51 and RAD54 which is essential in mitotic DNA double strand break (DSB) repair. Plays a key role in the regulation of embryonic neurogenesis. Promotes the proliferation of neural progenitors and inhibits neuronal differentiation during cortical development. Regulates neurogenesis via the modulation of RASSF10; regulates RASSF10 expression by promoting SETD1A-mediated H3K4 methylation at the RASSF10 promoter. In Bos taurus (Bovine), this protein is Nucleosome assembly protein 1-like 1 (NAP1L1).